The sequence spans 280 residues: 4-diphosphocytidyl-2-C-methyl-D-erythritol kinase (280 aa).

The active site involves Lys-8. ATP is bound at residue 91 to 101 (PVAAGLAGGST). Residue Asp-133 is part of the active site.

It belongs to the GHMP kinase family. IspE subfamily.

The enzyme catalyses 4-CDP-2-C-methyl-D-erythritol + ATP = 4-CDP-2-C-methyl-D-erythritol 2-phosphate + ADP + H(+). It functions in the pathway isoprenoid biosynthesis; isopentenyl diphosphate biosynthesis via DXP pathway; isopentenyl diphosphate from 1-deoxy-D-xylulose 5-phosphate: step 3/6. Functionally, catalyzes the phosphorylation of the position 2 hydroxy group of 4-diphosphocytidyl-2C-methyl-D-erythritol. In Clostridium botulinum (strain Loch Maree / Type A3), this protein is 4-diphosphocytidyl-2-C-methyl-D-erythritol kinase.